The sequence spans 492 residues: Variant surface glycoprotein MITAT 1.1 (492 aa).

Positions 1–32 (MATGRAKNTKWARWLSTAGLIIVVTLPATTMA) are cleaved as a signal peptide. Cystine bridges form between Cys47–Cys177 and Cys155–Cys222. 2 N-linked (GlcNAc...) asparagine glycosylation sites follow: Asn298 and Asn471. Ser475 is lipidated: GPI-anchor amidated serine. Positions 476–492 (NSFLIHKAPLLLAFLLF) are cleaved as a propeptide — removed in mature form.

Its subcellular location is the cell membrane. Its function is as follows. VSG forms a coat on the surface of the parasite. The trypanosome evades the immune response of the host by expressing a series of antigenically distinct VSGs from an estimated 1000 VSG genes. The protein is Variant surface glycoprotein MITAT 1.1 of Trypanosoma brucei brucei.